The primary structure comprises 506 residues: Peptidyl-prolyl cis-trans isomerase CYP59 (506 aa).

The region spanning Met1–Ile161 is the PPIase cyclophilin-type domain. The region spanning Asn243–Ser321 is the RRM domain. The segment at Gly341–Gly357 adopts a CCHC-type zinc-finger fold. Composition is skewed to basic and acidic residues over residues Glu388 to Gln404 and Gly412 to Arg506. The disordered stretch occupies residues Glu388–Arg506.

This sequence belongs to the cyclophilin-type PPIase family. As to quaternary structure, component of the BZR1 complex. Interacts with NRPB1 (via CTD domain), SCL28, SCL30, SCL30A, SCL33, SC35, SR30, SR34, RSZ21, RS2Z33, RS31 and RS40. Ubiquitous.

Its subcellular location is the nucleus. It carries out the reaction [protein]-peptidylproline (omega=180) = [protein]-peptidylproline (omega=0). Functionally, PPIases accelerate the folding of proteins. It catalyzes the cis-trans isomerization of proline imidic peptide bonds in oligopeptides. Influences somehow regulation of RNA pol II (CTD) phosphorylation. Binds RNA with preferences for GC-rich sequences. Probably involved in activities connecting transcription and pre-mRNA processing. Involved in brassinostroid response. The polypeptide is Peptidyl-prolyl cis-trans isomerase CYP59 (CYP59) (Arabidopsis thaliana (Mouse-ear cress)).